Reading from the N-terminus, the 266-residue chain is Small ribosomal subunit protein uS2 (266 aa).

The tract at residues 247 to 266 is disordered; the sequence is EGENNYSNNRSWNKPERTNN. Positions 249–258 are enriched in polar residues; sequence ENNYSNNRSW.

Belongs to the universal ribosomal protein uS2 family.

The chain is Small ribosomal subunit protein uS2 from Mesoplasma florum (strain ATCC 33453 / NBRC 100688 / NCTC 11704 / L1) (Acholeplasma florum).